Reading from the N-terminus, the 350-residue chain is Olfactory receptor 52I2 (350 aa).

Topologically, residues 1-55 (MCQQILRDCILLIHHLCINRKKVSLVMLGPAYNHTMETPASFLLVGIPGLQSSHL) are extracellular. N-linked (GlcNAc...) asparagine glycosylation is present at Asn-33. The helical transmembrane segment at 56-76 (WLAISLSAMYIIALLGNTIIV) threads the bilayer. At 77–84 (TAIWMDST) the chain is on the cytoplasmic side. The chain crosses the membrane as a helical span at residues 85-105 (RHEPMYCFLCVLAAVDIVMAS). Residues 106–129 (SVVPKMVSIFCSGDSSISFSACFT) lie on the Extracellular side of the membrane. An intrachain disulfide couples Cys-127 to Cys-219. The chain crosses the membrane as a helical span at residues 130–150 (QMFFVHLATAVETGLLLTMAF). At 151-169 (DRYVAICKPLHYKRILTPQ) the chain is on the cytoplasmic side. Residues 170-190 (VMLGMSMAITIRAIIAITPLS) form a helical membrane-spanning segment. Residues 191–226 (WMVSHLPFCGSNVVVHSYCEHIALARLACADPVPSS) lie on the Extracellular side of the membrane. Residues 227 to 247 (LYSLIGSSLMVGSDVAFIAAS) traverse the membrane as a helical segment. Topologically, residues 248 to 267 (YILILKAVFGLSSKTAQLKA) are cytoplasmic. Residues 268–288 (LSTCGSHVGVMALYYLPGMAS) form a helical membrane-spanning segment. The Extracellular portion of the chain corresponds to 289-304 (IYAAWLGQDVVPLHTQ). The helical transmembrane segment at 305 to 325 (VLLADLYVIIPATLNPIIYGM) threads the bilayer. Residues 326–350 (RTKQLRERIWSYLMHVLFDHSNLGS) lie on the Cytoplasmic side of the membrane.

It belongs to the G-protein coupled receptor 1 family.

The protein resides in the cell membrane. Odorant receptor. This chain is Olfactory receptor 52I2 (OR52I2), found in Homo sapiens (Human).